The sequence spans 97 residues: Large ribosomal subunit protein uL23 (97 aa).

This sequence belongs to the universal ribosomal protein uL23 family. As to quaternary structure, part of the 50S ribosomal subunit. Contacts protein L29, and trigger factor when it is bound to the ribosome.

Functionally, one of the early assembly proteins it binds 23S rRNA. One of the proteins that surrounds the polypeptide exit tunnel on the outside of the ribosome. Forms the main docking site for trigger factor binding to the ribosome. The sequence is that of Large ribosomal subunit protein uL23 from Lactococcus lactis subsp. cremoris (strain SK11).